The following is a 211-amino-acid chain: Outer-membrane lipoprotein carrier protein (211 aa).

The N-terminal stretch at 1 to 24 is a signal peptide; sequence MNTIKILIGLLGIFLFSLSGIVSA.

Belongs to the LolA family. Monomer.

The protein resides in the periplasm. In terms of biological role, participates in the translocation of lipoproteins from the inner membrane to the outer membrane. Only forms a complex with a lipoprotein if the residue after the N-terminal Cys is not an aspartate (The Asp acts as a targeting signal to indicate that the lipoprotein should stay in the inner membrane). This Coxiella burnetii (strain RSA 331 / Henzerling II) protein is Outer-membrane lipoprotein carrier protein.